A 445-amino-acid polypeptide reads, in one-letter code: Transcription activator AFTR-1 (445 aa).

The segment at residues 17 to 44 (CDFCTQSKLRCNKNKPSCRRCTLQQQPC) is a DNA-binding region (zn(2)-C6 fungal-type). The tract at residues 50–89 (RRTGRPPKHPRKANDCQEANGQHGDQDPVTSTPGGSYQQQ) is disordered. The span at 51 to 60 (RTGRPPKHPR) shows a compositional bias: basic residues. Positions 77-89 (PVTSTPGGSYQQQ) are enriched in polar residues.

It localises to the nucleus. Transcription factor that regulates the expression of the gene clusters that mediate the biosynthesis of the host-selective toxins (HSTs) AF-toxins responsible for Alternaria black spot of strawberry disease by the strawberry pathotype. On cellular level, AF-toxins affect plasma membrane of susceptible cells and cause a sudden increase in loss of K(+) after a few minutes of toxin treatment. The sequence is that of Transcription activator AFTR-1 from Alternaria alternata (Alternaria rot fungus).